The following is a 274-amino-acid chain: Penicillin-insensitive murein endopeptidase (274 aa).

The signal sequence occupies residues 1–19 (MNKTAIALLALLASSASLA). Intrachain disulfides connect Cys-44/Cys-265, Cys-187/Cys-235, and Cys-216/Cys-223. Zn(2+)-binding residues include His-110, His-113, Asp-120, Asp-147, His-150, and His-211. The interval 228–265 (LPPPGDGCGAELQSWFAPPKPGTTKPEKKTPPPLPPSC) is disordered.

It belongs to the peptidase M74 family. Dimer. Zn(2+) serves as cofactor.

It is found in the periplasm. In terms of biological role, murein endopeptidase that cleaves the D-alanyl-meso-2,6-diamino-pimelyl amide bond that connects peptidoglycan strands. Likely plays a role in the removal of murein from the sacculus. This is Penicillin-insensitive murein endopeptidase from Shigella boydii serotype 18 (strain CDC 3083-94 / BS512).